We begin with the raw amino-acid sequence, 246 residues long: Phosphate import ATP-binding protein PstB (246 aa).

The 239-residue stretch at 3 to 241 (AKTTNLNLFY…PKQEKTKAYL (239 aa)) folds into the ABC transporter domain. 35–42 (GASGCGKS) serves as a coordination point for ATP.

It belongs to the ABC transporter superfamily. Phosphate importer (TC 3.A.1.7) family. The complex is composed of two ATP-binding proteins (PstB), two transmembrane proteins (PstC and PstA) and a solute-binding protein (PstS).

The protein localises to the cell inner membrane. The catalysed reaction is phosphate(out) + ATP + H2O = ADP + 2 phosphate(in) + H(+). Its function is as follows. Part of the ABC transporter complex PstSACB involved in phosphate import. Responsible for energy coupling to the transport system. The chain is Phosphate import ATP-binding protein PstB from Campylobacter jejuni subsp. jejuni serotype O:2 (strain ATCC 700819 / NCTC 11168).